A 185-amino-acid polypeptide reads, in one-letter code: RTDCYGNVNRIDTTGASCKTAKPEGLSYCGVPASKTIAERDLKAMDRYKTIIKKVGEKLCVEPAVIAGIISRESHAGKVLKNGWGDRGNGFGLMQVDKRSHKPQGTWNGEVHITQGTTILTDFIKRIQKKFPSWTKDQQLKGGISAYNAGAGNVRSYARMDIGTTHDDYANDVVARAQYYKQHGY.

Disulfide bonds link cysteine 4/cysteine 60 and cysteine 18/cysteine 29. Glutamate 73 is an active-site residue.

The protein belongs to the glycosyl hydrolase 23 family.

The protein localises to the secreted. It catalyses the reaction Hydrolysis of (1-&gt;4)-beta-linkages between N-acetylmuramic acid and N-acetyl-D-glucosamine residues in a peptidoglycan and between N-acetyl-D-glucosamine residues in chitodextrins.. The polypeptide is Lysozyme g (Cygnus atratus (Black swan)).